Here is a 359-residue protein sequence, read N- to C-terminus: Alanine racemase (359 aa).

Residue Lys-34 is the Proton acceptor; specific for D-alanine of the active site. An N6-(pyridoxal phosphate)lysine modification is found at Lys-34. Arg-129 contributes to the substrate binding site. The active-site Proton acceptor; specific for L-alanine is the Tyr-254. A substrate-binding site is contributed by Met-302.

This sequence belongs to the alanine racemase family. Pyridoxal 5'-phosphate is required as a cofactor.

It catalyses the reaction L-alanine = D-alanine. It participates in amino-acid biosynthesis; D-alanine biosynthesis; D-alanine from L-alanine: step 1/1. In terms of biological role, catalyzes the interconversion of L-alanine and D-alanine. May also act on other amino acids. This chain is Alanine racemase (alr), found in Yersinia pestis.